A 118-amino-acid polypeptide reads, in one-letter code: Small ribosomal subunit protein uS13 (118 aa).

Positions 94-118 (GLPVHGQRTKTNARTRKGPAKSITR) are disordered.

It belongs to the universal ribosomal protein uS13 family. As to quaternary structure, part of the 30S ribosomal subunit. Forms a loose heterodimer with protein S19. Forms two bridges to the 50S subunit in the 70S ribosome.

In terms of biological role, located at the top of the head of the 30S subunit, it contacts several helices of the 16S rRNA. In the 70S ribosome it contacts the 23S rRNA (bridge B1a) and protein L5 of the 50S subunit (bridge B1b), connecting the 2 subunits; these bridges are implicated in subunit movement. Contacts the tRNAs in the A and P-sites. The chain is Small ribosomal subunit protein uS13 from Acidithiobacillus ferrooxidans (strain ATCC 23270 / DSM 14882 / CIP 104768 / NCIMB 8455) (Ferrobacillus ferrooxidans (strain ATCC 23270)).